Here is a 246-residue protein sequence, read N- to C-terminus: Sugar fermentation stimulation protein homolog (246 aa).

This sequence belongs to the SfsA family.

This chain is Sugar fermentation stimulation protein homolog, found in Prochlorococcus marinus (strain MIT 9301).